A 274-amino-acid chain; its full sequence is 5'-3' exoribonuclease (274 aa).

Residues His8, His10, Asp15, His40, Glu65, His76, His190, Asp247, and His249 each contribute to the Mn(2+) site.

Belongs to the PHP family. TrpH/YciV subfamily. It depends on Mn(2+) as a cofactor.

It carries out the reaction a ribonucleoside 3',5'-bisphosphate + H2O = a ribonucleoside 5'-phosphate + phosphate. Functionally, efficiently catalyzes the hydrolysis of the 3'-phosphate from 3',5'-bis-phosphonucleotides as well as the successive hydrolysis of 5'-phosphomononucleotides from the 5'-end of short pieces of RNA and DNA, with no specificity toward the identity of the nucleotide base. Is more efficient at hydrolyzing RNA oligonucleotides than DNA oligonucleotides. This enzyme can also hydrolyze annealed DNA duplexes, albeit at a catalytic efficiency lower than that of the corresponding single-stranded oligonucleotides. The protein is 5'-3' exoribonuclease of Haemophilus influenzae (strain ATCC 51907 / DSM 11121 / KW20 / Rd).